Consider the following 323-residue polypeptide: Calcium homeostasis modulator protein 2 (323 aa).

At 1–21 (MAALIAENFRFLSLFFKSKDV) the chain is on the cytoplasmic side. Positions 14 to 39 (LFFKSKDVMIFNGLVALGTVGSQELF) are central pore. Residues 22 to 43 (MIFNGLVALGTVGSQELFTVVA) traverse the membrane as a helical segment. Topologically, residues 44–52 (FHCPCSPAR) are extracellular. Disulfide bonds link Cys-46/Cys-130 and Cys-48/Cys-162. Residues 53–76 (NYLYGLAAIGVPALALFLIGVILN) traverse the membrane as a helical segment. The Cytoplasmic segment spans residues 77-101 (NHTWNLVAECQYRRTKNCSAAPNFL). The helical transmembrane segment at 102-132 (LLSSIVGRAAVAPVTWSVISLLRGEAYVCAL) threads the bilayer. At 133–179 (SEFVNPHSLMVGERSFPVAHATEILARFPCGEGPANLSVFREEVSRR) the chain is on the extracellular side. The segment at 145–152 (ERSFPVAH) is hemichannel docking. A helical transmembrane segment spans residues 180-206 (LKYESQLFGWLLIGVVAILVFLTKCLK). Over 207–323 (HYCSPLSYRQ…DHVEMSLLPS (117 aa)) the chain is Cytoplasmic. Positions 214-251 (YRQEAYWAQYRANEDQLFQRTAEVHSRVLAANNVRRFF) are intersubunit interaction.

Belongs to the CALHM family. As to quaternary structure, homo-undecamer. Two undecameric hemichannels can assemble in a head-to-head manner to form a gap junction.

Its subcellular location is the cell membrane. The catalysed reaction is ATP(in) = ATP(out). In terms of biological role, pore-forming subunit of Ca(2+) homeostasis modulator channels. Mediates ATP release from astrocytes and ATP-induced Ca(2+) influx in microglia thus regulating neuronal ATP and Ca(2+) homeostasis, synaptic transmission and neuroinflammatory response. May form intercellular gap junctions. The gating mechanism remains unknown. The chain is Calcium homeostasis modulator protein 2 (CALHM2) from Bos taurus (Bovine).